Here is a 181-residue protein sequence, read N- to C-terminus: Probable pyruvoyl-dependent arginine decarboxylase (181 aa).

Ser43 is modified (pyruvic acid (Ser)).

The protein belongs to the PdaD family. It depends on pyruvate as a cofactor.

It carries out the reaction L-arginine + H(+) = agmatine + CO2. The chain is Probable pyruvoyl-dependent arginine decarboxylase from Prosthecochloris aestuarii (strain DSM 271 / SK 413).